Reading from the N-terminus, the 746-residue chain is Histone-lysine N-methyltransferase EZH2 (746 aa).

An interaction with DNMT1, DNMT3A and DNMT3B region spans residues 1 to 340 (MGQTGKKSEK…AKEFAAALTA (340 aa)). A Phosphoserine; by PKB/AKT1 modification is found at S21. Positions 39 to 68 (KSMFSSNRQKILERTEILNQEWKQRRIQPV) are interaction with EED. The O-linked (GlcNAc) serine glycan is linked to S75. The residue at position 76 (S76) is a Phosphoserine. Residues 180-222 (QYNDDDDDDDGDDPEEREEKQKDLEDHRDDKESRPPRKFPSDK) form a disordered region. Acidic residues predominate over residues 182–195 (NDDDDDDDGDDPEE). Positions 196 to 222 (REEKQKDLEDHRDDKESRPPRKFPSDK) are enriched in basic and acidic residues. Residues 329-522 (EGAKEFAAAL…SSNHVYNYQP (194 aa)) form an interaction with CDYL region. T339 carries the post-translational modification Phosphothreonine. The tract at residues 340–426 (AERIKTPPKR…PIKMKPNIEP (87 aa)) is disordered. A Phosphothreonine; by CDK1 and CDK2 modification is found at T345. Residues 345-357 (TPPKRPGGRRRGR) are compositionally biased toward basic residues. Phosphoserine is present on residues S363 and S366. T367 carries the post-translational modification Phosphothreonine. Basic and acidic residues predominate over residues 374–385 (ESKDTDSDREAG). A Phosphothreonine modification is found at T487. The 103-residue stretch at 503 to 605 (CRKIQLKKDG…SKNVSCKNCS (103 aa)) folds into the CXC domain. Residues 612–727 (KHLLLAPSDV…TGEELFFDYR (116 aa)) enclose the SET domain. K634 participates in a covalent cross-link: Glycyl lysine isopeptide (Lys-Gly) (interchain with G-Cter in SUMO2).

It belongs to the class V-like SAM-binding methyltransferase superfamily. Histone-lysine methyltransferase family. EZ subfamily. As to quaternary structure, component of the PRC2/EED-EZH2 complex, which includes EED, EZH2, SUZ12, RBBP4 and RBBP7 and possibly AEBP2. The minimum components required for methyltransferase activity of the PRC2/EED-EZH2 complex are EED, EZH2 and SUZ12. The PRC2 complex may also interact with DNMT1, DNMT3A, DNMT3B and PHF1 via the EZH2 subunit and with SIRT1 via the SUZ12 subunit. Interacts with HDAC1 and HDAC2. Binds ATRX via the SET domain. Interacts with PRAME. Interacts with CDYL. Interacts with BMAL1, CLOCK and CRY1. Interacts with DNMT3L; the interaction is direct. Interacts with EZHIP; the interaction blocks EZH2 methyltransferase activity. Interacts with ZNF263; recruited to the SIX3 promoter along with other proteins involved in chromatin modification and transcriptional corepression where it contributes to transcriptional repression. Interacts with ARMC12. Interacts with ZMYND8; the interaction is dependent on the presence of chromatin. Interacts with DDX18; this interaction inhibits the PRC2 complex. In terms of processing, phosphorylated by AKT1. Phosphorylation by AKT1 reduces methyltransferase activity. Phosphorylation at Thr-345 by CDK1 and CDK2 promotes maintenance of H3K27me3 levels at EZH2-target loci, thus leading to epigenetic gene silencing. Post-translationally, sumoylated. Glycosylated: O-GlcNAcylation at Ser-75 by OGT increases stability of EZH2 and facilitates the formation of H3K27me3 by the PRC2/EED-EZH2 complex.

The protein localises to the nucleus. It catalyses the reaction L-lysyl(27)-[histone H3] + 3 S-adenosyl-L-methionine = N(6),N(6),N(6)-trimethyl-L-lysyl(27)-[histone H3] + 3 S-adenosyl-L-homocysteine + 3 H(+). Its function is as follows. Polycomb group (PcG) protein. Catalytic subunit of the PRC2/EED-EZH2 complex, which methylates 'Lys-9' (H3K9me) and 'Lys-27' (H3K27me) of histone H3, leading to transcriptional repression of the affected target gene. Able to mono-, di- and trimethylate 'Lys-27' of histone H3 to form H3K27me1, H3K27me2 and H3K27me3, respectively. Displays a preference for substrates with less methylation, loses activity when progressively more methyl groups are incorporated into H3K27, H3K27me0 &gt; H3K27me1 &gt; H3K27me2. Compared to EZH1-containing complexes, it is more abundant in embryonic stem cells and plays a major role in forming H3K27me3, which is required for embryonic stem cell identity and proper differentiation. The PRC2/EED-EZH2 complex may also serve as a recruiting platform for DNA methyltransferases, thereby linking two epigenetic repression systems. EZH2 can also methylate non-histone proteins such as the transcription factor GATA4 and the nuclear receptor RORA. Regulates the circadian clock via histone methylation at the promoter of the circadian genes. Essential for the CRY1/2-mediated repression of the CLOCK-BMAL1 transcriptional activation of PER1/2. Involved in the di and trimethylation of 'Lys-27' of histone H3 on PER1/2 promoters which is necessary for the CRY1/2 proteins to inhibit transcription. This is Histone-lysine N-methyltransferase EZH2 (EZH2) from Macaca fascicularis (Crab-eating macaque).